A 218-amino-acid polypeptide reads, in one-letter code: Small ribosomal subunit protein uS3c (218 aa).

In terms of domain architecture, KH type-2 spans 47-118; the sequence is VQKNMKTSSG…KLNIAITRIE (72 aa).

The protein belongs to the universal ribosomal protein uS3 family. As to quaternary structure, part of the 30S ribosomal subunit.

The protein localises to the plastid. It localises to the chloroplast. The chain is Small ribosomal subunit protein uS3c (rps3) from Lactuca sativa (Garden lettuce).